The following is a 317-amino-acid chain: Transaldolase (317 aa).

The active-site Schiff-base intermediate with substrate is lysine 126.

This sequence belongs to the transaldolase family. Type 1 subfamily. As to quaternary structure, homodimer.

Its subcellular location is the cytoplasm. The enzyme catalyses D-sedoheptulose 7-phosphate + D-glyceraldehyde 3-phosphate = D-erythrose 4-phosphate + beta-D-fructose 6-phosphate. It participates in carbohydrate degradation; pentose phosphate pathway; D-glyceraldehyde 3-phosphate and beta-D-fructose 6-phosphate from D-ribose 5-phosphate and D-xylulose 5-phosphate (non-oxidative stage): step 2/3. Transaldolase is important for the balance of metabolites in the pentose-phosphate pathway. This chain is Transaldolase, found in Burkholderia mallei (strain SAVP1).